We begin with the raw amino-acid sequence, 421 residues long: MKDRVIQVDERLPFLQSIPLSLQHLFAMFGSTVLVPMLLQINPAICLLMNGIGTLIYIFLCKGRIPAYLGSSFAFISPVLIVISTRSYEAALSGFLVVGLVFCLIGLLVKAVGTGWIEIVFPPAAMGAIVAVIGLELAPTAANMAGFVASAGTEGWSPDPKVIAVSLVTLLTAVVGNVMFRGFMKIIPILISIIVGYALAAFLGIVDFSIVREAKWFDLPTFYIMKWDWSSIAIIVPAALVVVAEHIGHLIVTSNIVGKDLSKDPGLDRSLLGNGVSTVISSFVGSTPNTTYGENIGVLALTRVYSIWIIGGAAVMAIVLSFVGKLAALIQTIPVPVMGGVSILLFGVIAGSGVRMLVEAKVDYSNPKNLILTAVVLIIGISGAAFKWGNFEMKGMALATVIAILLGLFFNIIDKLKWSNE.

12 helical membrane passes run 18 to 38 (IPLSLQHLFAMFGSTVLVPML), 41 to 61 (INPAICLLMNGIGTLIYIFLC), 65 to 85 (IPAYLGSSFAFISPVLIVIST), 89 to 109 (EAALSGFLVVGLVFCLIGLLV), 115 to 135 (GWIEIVFPPAAMGAIVAVIGL), 160 to 180 (PKVIAVSLVTLLTAVVGNVMF), 186 to 206 (IIPILISIIVGYALAAFLGIV), 232 to 252 (IAIIVPAALVVVAEHIGHLIV), 304 to 324 (VYSIWIIGGAAVMAIVLSFVG), 329 to 349 (LIQTIPVPVMGGVSILLFGVI), 371 to 391 (ILTAVVLIIGISGAAFKWGNF), and 393 to 413 (MKGMALATVIAILLGLFFNII).

The protein belongs to the nucleobase:cation symporter-2 (NCS2) (TC 2.A.40) family.

It localises to the cell membrane. Inhibited by the proton gradient disruptor carbonyl cyanide m-chlorophenylhydrazone (CCCP), but not by the sodium gradient disruptor ouabain. Both xanthine and uric acid act as competitive inhibitors of uracil transport. In terms of biological role, specific for the uptake of uracil. Transport is probably proton-dependent. This chain is Uracil permease, found in Paenibacillus larvae subsp. larvae (strain NRRL B-3650 / LMG 16245).